The primary structure comprises 240 residues: Probable transcriptional regulatory protein PBPRB1582 (240 aa).

This sequence belongs to the TACO1 family.

It is found in the cytoplasm. This Photobacterium profundum (strain SS9) protein is Probable transcriptional regulatory protein PBPRB1582.